Reading from the N-terminus, the 752-residue chain is Cytosolic phospholipase A2 (752 aa).

The phospholipid binding stretch occupies residues 1-178; sequence MSFIDPYQHI…MKKLLGPKKS (178 aa). S2 bears the Phosphoserine mark. Residues 6 to 122 form the C2 domain; the sequence is PYQHIIVEHQ…KVGEKKEVPF (117 aa). Ca(2+) is bound by residues D40, T41, D43, N65, D93, A94, and N95. Residues 140-740 form the PLA2c domain; sequence SCPDLRFSMA…SNVEARKFFN (601 aa). S228 functions as the Nucleophile in the catalytic mechanism. T268 is subject to Phosphothreonine. The tract at residues 427–457 is disordered; the sequence is KHIVSNDSSDSDDEAQGPKGTENEDAEREYQ. Residues S434, S435, and S437 each carry the phosphoserine modification. S505 is subject to Phosphoserine; by MAPK. Phosphoserine occurs at positions 511 and 515. K541 participates in a covalent cross-link: Glycyl lysine isopeptide (Lys-Gly) (interchain with G-Cter in SUMO2). Catalysis depends on D549, which acts as the Proton acceptor. K606 is covalently cross-linked (Glycyl lysine isopeptide (Lys-Gly) (interchain with G-Cter in SUMO2)). Phosphoserine is present on residues S727 and S729.

In terms of assembly, interacts with KAT5. In terms of processing, phosphorylated at both Ser-505 and Ser-727 in response to mitogenic stimuli. In terms of tissue distribution, in brain tissue, expressed in low levels in olfactory mitral and granule cells, in hippocampal pyramidal cells and in dentate and cerebellar granule cells.

It localises to the cytoplasm. The protein localises to the golgi apparatus membrane. The protein resides in the nucleus envelope. The enzyme catalyses a 1,2-diacyl-sn-glycero-3-phosphocholine + H2O = a 1-acyl-sn-glycero-3-phosphocholine + a fatty acid + H(+). The catalysed reaction is a 1-O-alkyl-2-acyl-sn-glycero-3-phosphocholine + H2O = a 1-O-alkyl-sn-glycero-3-phosphocholine + a fatty acid + H(+). It catalyses the reaction a 1-acyl-sn-glycero-3-phosphocholine + H2O = sn-glycerol 3-phosphocholine + a fatty acid + H(+). It carries out the reaction 1-hexadecanoyl-2-(5Z,8Z,11Z,14Z-eicosatetraenoyl)-sn-glycero-3-phosphocholine + H2O = 1-hexadecanoyl-sn-glycero-3-phosphocholine + (5Z,8Z,11Z,14Z)-eicosatetraenoate + H(+). The enzyme catalyses 1,2-di-(5Z,8Z,11Z,14Z-eicosatetraenoyl)-sn-glycero-3-phosphocholine + H2O = 1-(5Z,8Z,11Z,14Z-eicosatetraenoyl)-sn-glycero-3-phosphocholine + (5Z,8Z,11Z,14Z)-eicosatetraenoate + H(+). The catalysed reaction is 1-octadecanoyl-2-(5Z,8Z,11Z,14Z-eicosatetraenoyl)-sn-glycero-3-phosphocholine + H2O = 1-octadecanoyl-sn-glycero-3-phosphocholine + (5Z,8Z,11Z,14Z)-eicosatetraenoate + H(+). It catalyses the reaction 1-hexadecanoyl-2-(9Z,12Z-octadecadienoyl)-sn-glycero-3-phosphocholine + H2O = (9Z,12Z)-octadecadienoate + 1-hexadecanoyl-sn-glycero-3-phosphocholine + H(+). It carries out the reaction 1-octadecanoyl-2-(9Z,12Z,15Z-octadecatrienoyl)-sn-glycero-3-phosphocholine + H2O = (9Z,12Z,15Z)-octadecatrienoate + 1-octadecanoyl-sn-glycero-3-phosphocholine + H(+). The enzyme catalyses 1-(5Z,8Z,11Z,14Z-eicosatetraenoyl)-2-hexadecanoyl-sn-glycero-3-phosphocholine + H2O = 1-(5Z,8Z,11Z,14Z-eicosatetraenoyl)-sn-glycero-3-phosphocholine + hexadecanoate + H(+). The catalysed reaction is 1-O-hexadecyl-2-(5Z,8Z,11Z,14Z)-eicosatetraenoyl-sn-glycero-3-phosphocholine + H2O = 1-O-hexadecyl-sn-glycero-3-phosphocholine + (5Z,8Z,11Z,14Z)-eicosatetraenoate + H(+). It catalyses the reaction 1,2-di-(9Z-octadecenoyl)-sn-glycero-3-phospho-(1'-sn-glycerol) + H2O = 1-(9Z-octadecenoyl)-sn-glycero-3-phospho-(1'-sn-glycerol) + (9Z)-octadecenoate + H(+). It carries out the reaction 1-octadecanoyl-2-(5Z,8Z,11Z,14Z-eicosatetraenoyl)-sn-glycero-3-phosphate + H2O = 1-octadecanoyl-sn-glycero-3-phosphate + (5Z,8Z,11Z,14Z)-eicosatetraenoate + H(+). The enzyme catalyses 1-hexadecanoyl-sn-glycero-3-phosphocholine + H2O = sn-glycerol 3-phosphocholine + hexadecanoate + H(+). The catalysed reaction is 2-(prostaglandin E2)-sn-glycero-3-phosphoethanolamine + H2O = sn-glycero-3-phosphoethanolamine + prostaglandin E2 + H(+). It catalyses the reaction 2-[(15S)-hydroxy-(5Z,8Z,11Z,13E)-eicosatetraenoyl]-sn-glycero-3-phosphocholine + H2O = (15S)-hydroxy-(5Z,8Z,11Z,13E)-eicosatetraenoate + sn-glycerol 3-phosphocholine + H(+). It carries out the reaction 2-[(15R)-hydroxy-(5Z,8Z,11Z,13E)-eicosatetraenoyl]-sn-glycero-3-phosphocholine + H2O = (15R)-hydroxy-(5Z,8Z,11Z,13E)-eicosatetraenoate + sn-glycerol 3-phosphocholine + H(+). The enzyme catalyses 2-(prostaglandin E2)-sn-glycero-3-phosphocholine + H2O = prostaglandin E2 + sn-glycerol 3-phosphocholine + H(+). The catalysed reaction is 2-[(11R)-hydroxy-(5Z,8Z,12E,14Z)-eicosatetraenoyl]-sn-glycero-3-phosphocholine + H2O = (11R)-hydroxy-(5Z,8Z,12E,14Z)-eicosatetraenoate + sn-glycerol 3-phosphocholine + H(+). It catalyses the reaction 1-(5Z,8Z,11Z,14Z-eicosatetraenoyl)-2-O-hexadecyl-sn-glycero-3-phosphocholine + H2O = 2-O-hexadecyl-sn-glycero-3-phosphocholine + (5Z,8Z,11Z,14Z)-eicosatetraenoate + H(+). It carries out the reaction 1-octadecanoyl-2-(5Z,8Z,11Z,14Z-eicosatetraenoyl)-sn-glycero-3-phosphocholine + glycerol = 1-(5Z,8Z,11Z,14Z-eicosatetraenoyl)-glycerol + 1-octadecanoyl-sn-glycero-3-phosphocholine. The enzyme catalyses 1-octadecanoyl-2-(9Z,12Z,15Z-octadecatrienoyl)-sn-glycero-3-phosphocholine + glycerol = 1-(9Z,12Z,15Z-octadecatrienoyl)-glycerol + 1-octadecanoyl-sn-glycero-3-phosphocholine. It functions in the pathway lipid metabolism; arachidonate metabolism. The protein operates within membrane lipid metabolism; glycerophospholipid metabolism. Its pathway is lipid metabolism; prostaglandin biosynthesis. It participates in lipid metabolism; leukotriene B4 biosynthesis. With respect to regulation, activated by cytosolic calcium, which is necessary for binding to membrane lipids. Activated by phosphorylation in response to mitogenic stimuli. In terms of biological role, has primarily calcium-dependent phospholipase and lysophospholipase activities, with a major role in membrane lipid remodeling and biosynthesis of lipid mediators of the inflammatory response. Plays an important role in embryo implantation and parturition through its ability to trigger prostanoid production. Preferentially hydrolyzes the ester bond of the fatty acyl group attached at sn-2 position of phospholipids (phospholipase A2 activity). Selectively hydrolyzes sn-2 arachidonoyl group from membrane phospholipids, providing the precursor for eicosanoid biosynthesis via the cyclooxygenase pathway. In an alternative pathway of eicosanoid biosynthesis, hydrolyzes sn-2 fatty acyl chain of eicosanoid lysophopholipids to release free bioactive eicosanoids. Hydrolyzes the ester bond of the fatty acyl group attached at sn-1 position of phospholipids (phospholipase A1 activity) only if an ether linkage rather than an ester linkage is present at the sn-2 position. This hydrolysis is not stereospecific. Has calcium-independent phospholipase A2 and lysophospholipase activities in the presence of phosphoinositides. Has O-acyltransferase activity. Catalyzes the transfer of fatty acyl chains from phospholipids to a primary hydroxyl group of glycerol (sn-1 or sn-3), potentially contributing to monoacylglycerol synthesis. This is Cytosolic phospholipase A2 (Pla2g4a) from Rattus norvegicus (Rat).